The primary structure comprises 433 residues: Acetyl-CoA-benzylalcohol acetyltransferase (433 aa).

Catalysis depends on proton acceptor residues His-152 and Asp-377.

This sequence belongs to the plant acyltransferase family.

It carries out the reaction benzyl alcohol + acetyl-CoA = benzyl acetate + CoA. The enzyme catalyses (E)-cinnamyl alcohol + acetyl-CoA = (E)-cinnamyl acetate + CoA. Involved in the biosynthesis of benzyl acetate, a major constituent of the floral scent. Can use benzylalcohol, cinnamylalcohol, 3-cis-hexene-1-ol or heptanol as substrates. Has some activity with 2-phenylethanol and 2-naphtalene-ethanol. The sequence is that of Acetyl-CoA-benzylalcohol acetyltransferase (BEAT) from Clarkia breweri (Fairy fans).